The chain runs to 61 residues: Small ribosomal subunit protein uS14B (61 aa).

Cys-24, Cys-27, Cys-40, and Cys-43 together coordinate Zn(2+).

It belongs to the universal ribosomal protein uS14 family. Zinc-binding uS14 subfamily. In terms of assembly, part of the 30S ribosomal subunit. Contacts proteins S3 and S10. Zn(2+) is required as a cofactor.

Its function is as follows. Binds 16S rRNA, required for the assembly of 30S particles and may also be responsible for determining the conformation of the 16S rRNA at the A site. The polypeptide is Small ribosomal subunit protein uS14B (Lactiplantibacillus plantarum (strain ATCC BAA-793 / NCIMB 8826 / WCFS1) (Lactobacillus plantarum)).